The chain runs to 399 residues: Zinc finger TRAF-type-containing protein 1 (399 aa).

Positions 1–13 are enriched in gly residues; that stretch reads MSGAEEAGGGGPA. The interval 1–20 is disordered; sequence MSGAEEAGGGGPAAGPAGAV. The RING-type; degenerate zinc finger occupies 106–151; the sequence is CTVCLDLPKASVYQCTNGHLMCAGCFIHLLADARLKEEQATCPNCR. Residues 152–210 form a TRAF-type zinc finger; sequence CEISKSLCCRNLAVEKAVSELPSECGFCLRQFPRSLLERHQKEECQDRVTQCKYKRIGC.

The protein belongs to the ZFTRAF1 family. Interacts with LGALS3.

The protein resides in the cytoplasm. The protein localises to the perinuclear region. This chain is Zinc finger TRAF-type-containing protein 1, found in Rattus norvegicus (Rat).